Here is a 178-residue protein sequence, read N- to C-terminus: Protein GrpE (178 aa).

Over residues 1 to 11 (MSENQNPPPSP) the composition is skewed to pro residues. Residues 1–23 (MSENQNPPPSPEEIEAAMSANAA) are disordered.

Belongs to the GrpE family. As to quaternary structure, homodimer.

The protein resides in the cytoplasm. Functionally, participates actively in the response to hyperosmotic and heat shock by preventing the aggregation of stress-denatured proteins, in association with DnaK and GrpE. It is the nucleotide exchange factor for DnaK and may function as a thermosensor. Unfolded proteins bind initially to DnaJ; upon interaction with the DnaJ-bound protein, DnaK hydrolyzes its bound ATP, resulting in the formation of a stable complex. GrpE releases ADP from DnaK; ATP binding to DnaK triggers the release of the substrate protein, thus completing the reaction cycle. Several rounds of ATP-dependent interactions between DnaJ, DnaK and GrpE are required for fully efficient folding. This is Protein GrpE from Acidovorax sp. (strain JS42).